The primary structure comprises 293 residues: Ribosomal protein L11 methyltransferase (293 aa).

S-adenosyl-L-methionine-binding residues include threonine 145, glycine 166, aspartate 188, and asparagine 230.

Belongs to the methyltransferase superfamily. PrmA family.

It localises to the cytoplasm. It catalyses the reaction L-lysyl-[protein] + 3 S-adenosyl-L-methionine = N(6),N(6),N(6)-trimethyl-L-lysyl-[protein] + 3 S-adenosyl-L-homocysteine + 3 H(+). Methylates ribosomal protein L11. In Yersinia pseudotuberculosis serotype I (strain IP32953), this protein is Ribosomal protein L11 methyltransferase.